The sequence spans 150 residues: UPF0260 protein PP_4587 (150 aa).

Belongs to the UPF0260 family.

The polypeptide is UPF0260 protein PP_4587 (Pseudomonas putida (strain ATCC 47054 / DSM 6125 / CFBP 8728 / NCIMB 11950 / KT2440)).